A 462-amino-acid chain; its full sequence is Glycoprotein endo-alpha-1,2-mannosidase (462 aa).

At 1 to 8 the chain is on the cytoplasmic side; sequence MAKFRRGT. The helical; Signal-anchor for type II membrane protein transmembrane segment at 9 to 29 threads the bilayer; sequence CIILALFILFIFSLMMGLKML. The Lumenal segment spans residues 30–462; the sequence is RPNTATFGAP…YALDHQLPVS (433 aa). Positions 60 to 462 are catalytic; sequence DFQKSDRINS…YALDHQLPVS (403 aa).

This sequence belongs to the glycosyl hydrolase 99 family. Post-translationally, undergoes proteolytic cleavage in the C-terminal region.

It is found in the golgi apparatus membrane. The enzyme catalyses N-{alpha-Glc-(1-&gt;3)-alpha-Man-(1-&gt;2)-alpha-Man-(1-&gt;2)-alpha-Man-(1-&gt;3)-[alpha-Man-(1-&gt;2)-alpha-Man-(1-&gt;3)-[alpha-Man-(1-&gt;2)-alpha-Man-(1-&gt;6)]-alpha-Man-(1-&gt;6)]-beta-Man-(1-&gt;4)-beta-GlcNAc-(1-&gt;4)-beta-GlcNAc}-L-asparaginyl-[protein] + H2O = alpha-D-glucosyl-(1-&gt;3)-D-mannopyranose + N(4)-{alpha-D-Man-(1-&gt;2)-alpha-D-Man-(1-&gt;3)-[alpha-D-Man-(1-&gt;2)-alpha-D-Man-(1-&gt;3)-[alpha-D-Man-(1-&gt;2)-alpha-D-Man-(1-&gt;6)]-alpha-D-Man-(1-&gt;6)]-beta-D-Man-(1-&gt;4)-beta-D-GlaNAc-(1-&gt;4)-beta-D-GlcNAc}-L-asparaginyl-[protein] (N-glucan mannose isomer 8A1,2,3B1,2). This Pongo abelii (Sumatran orangutan) protein is Glycoprotein endo-alpha-1,2-mannosidase (MANEA).